A 171-amino-acid polypeptide reads, in one-letter code: Probable DNA-directed RNA polymerase subunit delta (171 aa).

Residues 14–81 form the HTH HARE-type domain; it reads MALVEIAYEI…SDQTWGLRSW (68 aa). A disordered region spans residues 138-171; sequence EFDEIDEADDDELDDLEDEILDDDEDFDEEEDEE.

This sequence belongs to the RpoE family. RNAP is composed of a core of 2 alpha, a beta and a beta' subunits. The core is associated with a delta subunit and one of several sigma factors.

In terms of biological role, participates in both the initiation and recycling phases of transcription. In the presence of the delta subunit, RNAP displays an increased specificity of transcription, a decreased affinity for nucleic acids, and an increased efficiency of RNA synthesis because of enhanced recycling. This Bacillus licheniformis (strain ATCC 14580 / DSM 13 / JCM 2505 / CCUG 7422 / NBRC 12200 / NCIMB 9375 / NCTC 10341 / NRRL NRS-1264 / Gibson 46) protein is Probable DNA-directed RNA polymerase subunit delta.